We begin with the raw amino-acid sequence, 540 residues long: MAKTIAFDEEARRGLERGLNALADAVKVTLGPKGRNVVLEKKWGAPTITNDGVSIAKEIELEDPYEKIGAELVKEVAKKTDDVAGDGTTTATVLAQALVREGLRNMAAGANPLGLKRGIEKAVEAVTEHLLKEAKEVETKEQIAATAGISAGDPAIGELIAEAMDKVGKEGVITVEESNTFGLQLELTEGMRFDKGFISGYFATDAERQEAVLEDAYILLVSSKISTVKDLLPLLEKVIQSGKPLAIIAEDVEGEALSTLIVNKIRGTFKSVAIKAPGFGDRRKAMLQDMAILTGGQVISEEVGLSLETAGLELLGQARQVVVTKDETTIVDGAGSKEQIEGRVSQIRAEIESSDSDYDREKLQERLAKLAGGVAVIKAGAATEVELKERKHRIEDAVRNAKAAVEEGIVAGGGAALAQSGKVFETLNLEGDEATGANIVKVALDAPVKQIAINAGLEPGVVAEKVRNSPAGTGLNAATGVYEDLLAAGINDPVKVTRSALQNASSIAALFLTTEAVVADKPEKAGAPVDPTGGMGGMDF.

ATP-binding positions include 29–32, 86–90, G413, 476–478, and D492; these read TLGP, DGTTT, and NAA.

Belongs to the chaperonin (HSP60) family. Forms a cylinder of 14 subunits composed of two heptameric rings stacked back-to-back. Interacts with the co-chaperonin GroES.

Its subcellular location is the cytoplasm. It catalyses the reaction ATP + H2O + a folded polypeptide = ADP + phosphate + an unfolded polypeptide.. Functionally, together with its co-chaperonin GroES, plays an essential role in assisting protein folding. The GroEL-GroES system forms a nano-cage that allows encapsulation of the non-native substrate proteins and provides a physical environment optimized to promote and accelerate protein folding. The polypeptide is Chaperonin GroEL (Tsukamurella paurometabola (Corynebacterium paurometabolum)).